Reading from the N-terminus, the 146-residue chain is Anti-sigma F factor (146 aa).

This sequence belongs to the anti-sigma-factor family.

It carries out the reaction L-seryl-[protein] + ATP = O-phospho-L-seryl-[protein] + ADP + H(+). It catalyses the reaction L-threonyl-[protein] + ATP = O-phospho-L-threonyl-[protein] + ADP + H(+). In terms of biological role, binds to sigma F and blocks its ability to form an RNA polymerase holoenzyme (E-sigma F). Phosphorylates SpoIIAA on a serine residue. This phosphorylation may enable SpoIIAA to act as an anti-anti-sigma factor that counteracts SpoIIAB and thus releases sigma F from inhibition. The polypeptide is Anti-sigma F factor (Geobacillus sp. (strain WCH70)).